The primary structure comprises 503 residues: ATP-dependent RNA helicase dbp3 (503 aa).

Positions Met-1–Arg-13 are enriched in basic and acidic residues. Positions Met-1–Thr-37 are disordered. Residues Ser-104 to Gln-112 carry the Q motif motif. The region spanning Trp-116 to Val-292 is the Helicase ATP-binding domain. Ala-129 to Thr-136 lines the ATP pocket. The short motif at Asp-239–Asp-242 is the DEAD box element. The 150-residue stretch at Arg-323–Gly-472 folds into the Helicase C-terminal domain.

Belongs to the DEAD box helicase family. DDX5/DBP2 subfamily.

The protein localises to the nucleus. It is found in the nucleolus. The enzyme catalyses ATP + H2O = ADP + phosphate + H(+). In terms of biological role, ATP-dependent RNA helicase required for 60S ribosomal subunit synthesis. Involved in efficient pre-rRNA processing, predominantly at site A3, which is necessary for the normal formation of 25S and 5.8S rRNAs. The polypeptide is ATP-dependent RNA helicase dbp3 (dbp3) (Aspergillus clavatus (strain ATCC 1007 / CBS 513.65 / DSM 816 / NCTC 3887 / NRRL 1 / QM 1276 / 107)).